The primary structure comprises 105 residues: Small ribosomal subunit protein uS10c (105 aa).

It belongs to the universal ribosomal protein uS10 family. In terms of assembly, part of the 30S ribosomal subunit.

Its subcellular location is the plastid. It is found in the chloroplast. Its function is as follows. Involved in the binding of tRNA to the ribosomes. This Pyropia yezoensis (Susabi-nori) protein is Small ribosomal subunit protein uS10c.